Reading from the N-terminus, the 113-residue chain is Gas vesicle protein I2 (113 aa).

Residues 1-93 (MTPTNRHTHG…TVPEQPTHAT (93 aa)) are disordered. Low complexity predominate over residues 11–22 (QNAQHARRNAQQ). Residues 52-63 (EQPTSDTTNPAA) show a composition bias toward polar residues. Low complexity predominate over residues 69–81 (AQRTNAQNAARNA). Polar residues predominate over residues 82-93 (HSTVPEQPTHAT).

It belongs to the gas vesicle GvpI family. As to quaternary structure, gvpF to GvpM interact with each other in vitro, and may form multi-subunit complex(es). Interacts with GvpC and GvpO.

It is found in the gas vesicle. Functionally, proteins GvpF to GvpM might be involved in nucleating gas vesicle formation. A minor component of the gas vesicle. Gas vesicles are hollow, gas filled proteinaceous nanostructures found in several microbial planktonic microorganisms. They allow positioning of halobacteria at the optimal depth for growth in the poorly aerated, shallow brine pools of their habitat. In terms of biological role, expression of 2 c-vac DNA fragments containing 2 divergently transcribed regions (gvpE-gvpF-gvpG-gvpH-gvpI-gvpJ-gvpK-gvpL-gvpM and gvpA-gvpC-gvpN-gvpO) allows H.volcanii to produce gas vesicles. The protein is Gas vesicle protein I2 of Halobacterium salinarum (strain ATCC 700922 / JCM 11081 / NRC-1) (Halobacterium halobium).